The sequence spans 188 residues: Ribosome-recycling factor (188 aa).

This sequence belongs to the RRF family.

The protein resides in the cytoplasm. Its function is as follows. Responsible for the release of ribosomes from messenger RNA at the termination of protein biosynthesis. May increase the efficiency of translation by recycling ribosomes from one round of translation to another. In Anaeromyxobacter sp. (strain K), this protein is Ribosome-recycling factor.